We begin with the raw amino-acid sequence, 154 residues long: ATP synthase subunit b (154 aa).

The helical transmembrane segment at 5–27 threads the bilayer; that stretch reads LLGQAIAFTLFVWFCMKYVWPPI.

The protein belongs to the ATPase B chain family. In terms of assembly, F-type ATPases have 2 components, F(1) - the catalytic core - and F(0) - the membrane proton channel. F(1) has five subunits: alpha(3), beta(3), gamma(1), delta(1), epsilon(1). F(0) has three main subunits: a(1), b(2) and c(10-14). The alpha and beta chains form an alternating ring which encloses part of the gamma chain. F(1) is attached to F(0) by a central stalk formed by the gamma and epsilon chains, while a peripheral stalk is formed by the delta and b chains.

The protein resides in the cell inner membrane. In terms of biological role, f(1)F(0) ATP synthase produces ATP from ADP in the presence of a proton or sodium gradient. F-type ATPases consist of two structural domains, F(1) containing the extramembraneous catalytic core and F(0) containing the membrane proton channel, linked together by a central stalk and a peripheral stalk. During catalysis, ATP synthesis in the catalytic domain of F(1) is coupled via a rotary mechanism of the central stalk subunits to proton translocation. Its function is as follows. Component of the F(0) channel, it forms part of the peripheral stalk, linking F(1) to F(0). This is ATP synthase subunit b from Aliivibrio fischeri (strain ATCC 700601 / ES114) (Vibrio fischeri).